The chain runs to 460 residues: tRNA modification GTPase MnmE (460 aa).

Residues Arg29, Glu91, and Lys132 each contribute to the (6S)-5-formyl-5,6,7,8-tetrahydrofolate site. Residues 227 to 383 enclose the TrmE-type G domain; sequence GISIALIGKT…LIDTIIKKCG (157 aa). Position 237 (Asn237) interacts with K(+). Residues 237–242, 256–262, and 281–284 contribute to the GTP site; these read NVGKSS, TNIPGTT, and DTAG. Ser241 is a Mg(2+) binding site. K(+)-binding residues include Thr256, Ile258, and Thr261. Thr262 is a Mg(2+) binding site. Lys460 contributes to the (6S)-5-formyl-5,6,7,8-tetrahydrofolate binding site.

The protein belongs to the TRAFAC class TrmE-Era-EngA-EngB-Septin-like GTPase superfamily. TrmE GTPase family. As to quaternary structure, homodimer. Heterotetramer of two MnmE and two MnmG subunits. It depends on K(+) as a cofactor.

It localises to the cytoplasm. Exhibits a very high intrinsic GTPase hydrolysis rate. Involved in the addition of a carboxymethylaminomethyl (cmnm) group at the wobble position (U34) of certain tRNAs, forming tRNA-cmnm(5)s(2)U34. The sequence is that of tRNA modification GTPase MnmE from Prochlorococcus marinus (strain MIT 9215).